A 426-amino-acid chain; its full sequence is Potassium channel subfamily K member 2 (426 aa).

Topologically, residues 1–61 are cytoplasmic; it reads MLASASRERP…SAINVMKWKT (61 aa). Important for GNG4 binding and L-glutamate release in astrocytes stretches follow at residues 17–38 and 51–61; these read AAPD…LSFS and DSAINVMKWKT. A helical transmembrane segment spans residues 62–82; the sequence is VSTIFLVVVLYLIIGATVFKA. N-linked (GlcNAc...) asparagine glycans are attached at residues Asn110 and Asn134. An intramembrane region (pore-forming) is located at residues 144–170; it reads LGSSFFFAGTVITTIGFGNISPRTEGG. Thr157, Ile158, Gly159, and Phe160 together coordinate K(+). A selectivity filter 1 region spans residues 157–162; that stretch reads TIGFGN. Residues 172–192 form a helical membrane-spanning segment; sequence IFCIIYALLGIPLFGFLLAGV. Over 193 to 222 the chain is Cytoplasmic; it reads GDQLGTIFGKGIAKVEDTFIKWNVSQTKIR. The chain crosses the membrane as a helical span at residues 223–243; it reads IISTIIFILFGCVLFVALPAV. The pore-forming intramembrane region spans 253–283; sequence ALDAIYFVVITLTTIGFGDYVAGGSDIEYLD. K(+) is bound by residues Thr266, Ile267, Gly268, and Phe269. Residues 266–271 form a selectivity filter 2 region; that stretch reads TIGFGD. A helical membrane pass occupies residues 288–308; it reads VVWFWILVGLAYFAAVLSMIG. Over 309–426 the chain is Cytoplasmic; that stretch reads DWLRVISKKT…EDIAVIENMK (118 aa). The segment at 313 to 326 is interaction with AKAP5; that stretch reads VISKKTKEEVGEFR. Residues 337 to 385 form an essential for chloroform and halothane sensitivity region; sequence TAEFKETRRRLSVEIYDKFQRATSVKRKLSAELAGNHNQELTPCRRTLS. Ser348 is modified (phosphoserine; by PKA).

Belongs to the two pore domain potassium channel (TC 1.A.1.8) family. Homodimer; disulfide-linked. Forms heterodimers with other 2-pore domain K(+) channel subunits, such as KCNK1, KCNK4, KCNK10 and KCNK18. Interacts with AKAP5; the channel is recruited to postsynaptic microdomains by AKAP5 where it can integrate neurotransmitter receptor signals. Part of a complex composed of AKAP5 and ADRB2. Upon AKAP5 binding, the channel is no longer sensitive to intracellular acidification, membrane stretch or arachidonic acid stimuli. Interacts with POPDC1; the interaction enhances KCNK2 surface expression and is inhibited by cAMP. Interacts (via N-terminus) with G-protein subunit GNG4 (via C-terminus); this interaction confers ion selectivity to L-glutamate and Cl(-) anions. Post-translationally, phosphorylation at Ser-348 controls the reversible conversion from a leak channel to a voltage-dependent channel. In terms of tissue distribution, expressed in cardiomyocytes (at protein level). Expressed in various brain regions including the lateral olfactory tract, piriform cortex of the forebrain, paraventricular and anteromedial thalamic nuclei, brainstem, caudate putamen, nucleus accumbens, neocortex and interpeduncular nucleus. Detected in astrocytes in hippocampus stratum radiatum. Expressed in brain and kidney.

It localises to the cell membrane. Its subcellular location is the endoplasmic reticulum membrane. It is found in the cell projection. The protein resides in the axon. The protein localises to the dendrite. It localises to the postsynaptic density membrane. Its subcellular location is the sarcolemma. The catalysed reaction is K(+)(in) = K(+)(out). It catalyses the reaction L-glutamate(out) = L-glutamate(in). The enzyme catalyses chloride(in) = chloride(out). It carries out the reaction Rb(+)(in) = Rb(+)(out). The catalysed reaction is Cs(+)(in) = Cs(+)(out). Its activity is regulated as follows. Activated by various stimuli including intracellular acidic pH, mechanical stretch and polyunsaturated fatty acids such as arachidonic acid. K(+) channel that conducts voltage-dependent outward rectifying currents upon membrane depolarization. Voltage sensing is coupled to K(+) electrochemical gradient in an 'ion flux gating' mode where outward but not inward ion flow opens the gate. Converts to voltage-independent 'leak' conductance mode upon stimulation by various stimuli including mechanical membrane stretch, acidic pH, heat and lipids. Reversibly converts between a voltage-insensitive K(+) 'leak' channel and a voltage-dependent outward rectifying K(+) channel in a phosphorylation-dependent manner. Homo- and heterodimerizes to form functional channels with distinct regulatory and gating properties. In trigeminal ganglia sensory neurons, the heterodimer of KCNK2/TREK-1 and KCNK18/TRESK inhibits neuronal firing and neurogenic inflammation by stabilizing the resting membrane potential at K(+) equilibrium potential as well as by regulating the threshold of action potentials and the spike frequency. At trigeminal A-beta afferent nerves, the heterodimer of KCNK2/TREK-1 and KCNK4/TRAAK is mostly coexpressed at nodes of Ranvier where it conducts voltage-independent mechanosensitive and thermosensitive currents, allowing rapid action potential repolarization, high speed and high frequence saltatory conduction on myelinated nerves to ensure prompt sensory responses. In hippocampal astrocytes, the heterodimer of KCNK2/TREK-1 and KCNK1/TWIK-1 allows passive K(+) conductance under basal conditions, but changes ion selectivity and becomes permeable to L-glutamate and Cl(-) ions upon binding to G-protein subunit GNG4 in stimulated astrocytes. Mediates rapid L-glutamate release in response to activation of G-protein-coupled receptors such as F2R and CNR1. In hippocampal pyramidal neurons, the homodimer of KCNK2/TREK-1 contributes to gamma-aminobutyric acid (GABA) B-induced slow inhibitory postsynaptic potential. Associates with AKAP5 and Gs-protein-coupled receptor B2AR at postsynaptic dense bodies and converts to a leak channel no longer sensitive to stimulation by arachidonic acid, acidic pH or mechanical stress, nor inhibited by Gq-coupled receptors but still under the negative control of Gs-coupled receptors. Permeable to other monovalent cations such as Rb(+) and Cs(+). Functionally, does not display channel activity but reduces the channel activity of isoform 1, isoform 2 and isoform 4 and reduces cell surface expression of isoform 2. This chain is Potassium channel subfamily K member 2, found in Rattus norvegicus (Rat).